The chain runs to 50 residues: U-megalopygitoxin(9)-Mo13 (50 aa).

The first 23 residues, 1–23 (MKLVFLFFIVAVMVSLFVGMTEA), serve as a signal peptide directing secretion. Residues cysteine 33 and cysteine 40 are joined by a disulfide bond.

It belongs to the caterpillar 9 family. As to expression, expressed by the venom apparatus.

The protein resides in the secreted. Functionally, probable toxin. The sequence is that of U-megalopygitoxin(9)-Mo13 from Megalopyge opercularis (Southern flannel moth).